Consider the following 862-residue polypeptide: Axin-1 (862 aa).

Residues 1–78 form a disordered region; it reads MNIQEQGFPL…GYEPEGSASP (78 aa). The Tankyrase-binding motif signature appears at 20 to 29; the sequence is APRPPVPGEE. A phosphoserine; by CK1 mark is found at serine 75 and serine 77. One can recognise an RGS domain in the interval 88–211; that stretch reads SLHSLLDDQD…LKSDIYLEYT (124 aa). The tract at residues 209-338 is interaction with TP53; that stretch reads EYTRTGSESP…DADTLSLTDS (130 aa). Disordered stretches follow at residues 215–289 and 316–344; these read SESP…YSEG and TSANDSEQQSLSSDADTLSLTDSSVDGIP. A Phosphoserine; by CK1 modification is found at serine 217. Positions 242–258 are enriched in acidic residues; sequence NEDEEWKCDQDMDEDDG. Residues 325-339 show a composition bias toward low complexity; it reads SLSSDADTLSLTDSS. Residues 348-433 are interaction with GSK3B; that stretch reads IRKQHRREMQ…DGDPSSGPPG (86 aa). Residues 353–411 are interaction with SIAH1 and SIAH2; that stretch reads RREMQESVQVNGRVPLPHIPRTYRVPKEVRVEPQKFAEELIHRLEAVQRTREAEEKLEE. Residues 413–441 are disordered; sequence LKRVRMEEEGEDGDPSSGPPGPCHKLPPA. Over residues 429–441 the composition is skewed to pro residues; that stretch reads SGPPGPCHKLPPA. The interaction with CTNNB1 stretch occupies residues 434–502; that stretch reads PCHKLPPAPA…SPDSGHVAKM (69 aa). Residue serine 469 is modified to Phosphoserine; by CK1. A disordered region spans residues 480–500; sequence RTPGRQSPGPGHRSPDSGHVA. Position 481 is a phosphothreonine; by GSK3-beta (threonine 481). Phosphoserine occurs at positions 486, 493, and 511. The tract at residues 507–757 is interaction with RNF111; the sequence is GGAASGHGKH…PVLHVVPAVS (251 aa). A compositionally biased stretch (basic residues) spans 531–544; the sequence is HHRHVHHHVHHSTA. 2 disordered regions span residues 531-629 and 641-679; these read HHRH…AEKN and KEISRHRRTGHGSSGTRKPQPHENSRPLSLEHPWAGPQL. Over residues 545-556 the composition is skewed to basic and acidic residues; that stretch reads RPKEQVEAEATR. Positions 575–789 are interaction with PPP2CA; that stretch reads SRGYSESVGA…CDSIVVAYYF (215 aa). The residue at position 581 (serine 581) is a Phosphoserine. The tract at residues 677–752 is interaction with HIPK2; it reads PQLRTSVQPS…RPACAPVLHV (76 aa). The 83-residue stretch at 780–862 folds into the DIX domain; that stretch reads CDSIVVAYYF…KIIGKVEKVD (83 aa). Residues lysine 857 and lysine 860 each participate in a glycyl lysine isopeptide (Lys-Gly) (interchain with G-Cter in SUMO) cross-link.

In terms of assembly, homodimer. Interacts with ZBED3; the interaction is direct, enhanced by protein kinase GSK3B and casein kinase CSNK1E activities and decreases GSK3B-induced beta-catenin serine and threonine phosphorylations. Component of the beta-catenin destruction complex, containing at least, CTNNB1, an axin and GSK3B, that regulates CTNNB1 protein levels through phosphorylation and ubiquitination. Interacts with CTNNB1 (via the armadillo repeats 2-7). Interacts with GSK3B; the interaction hyperphosphorylates CTNNB1 leading to its ubiquitination and destruction. Component of the AXIN1-HIPK2-TP53 complex. Interacts directly in the complex with TP53 and HIPK2. Interacts with DAXX; the interaction stimulates the interaction of DAXX with TP53, stimulates 'Ser-46' phosphorylation of TP53 and induces cell death on UV irradiation. Also binds APC, SMAD6, SMAD7 and RNF111. Interacts with DIXDC1; prevents interaction with MAP3K1. Interacts with MAP3K4. Interacts with ANKRD6 and AIDA. Interacts with MDFI; the interaction decreases AXIN1-mediated JUN N-terminal kinase (JNK) activation. Interacts with MDFIC; the interaction inhibits beta-cateninin-mediated signaling and AXIN1-mediated JUN N-terminal kinase (JNK) activation. Interacts with LRP5 (via its phosphorylated PPPSP motifs); the interaction is stimulated by WNT1 and GSK3B and activates beta-catenin signaling. Interacts (via the C-terminal) with PPP1CA; the interaction dephosphorylates AXIN1 and regulates interaction with GSK3B. Interacts with PPP2CA; the interaction dephosphorylates AXIN1. Interacts with MACF1. Found in a complex composed of MACF1, APC, AXIN1, CTNNB1 and GSK3B. Interacts with TNKS. Interacts with DAB2; the interaction is mutually exclusive with the AXIN1:PPP1CA interaction. Interacts with WDR26. Interacts with GID8. Interacts with SIAH1 and SIAH2; both probably catalyze AXIN1 ubiquitination and subsequent proteasome-mediated ubiquitin-dependent degradation. Interaction with GSK3B and AXIN1 is competitive. Post-translationally, phosphorylation and dephosphorylation of AXIN1 regulates assembly and function of the beta-catenin complex. Phosphorylated by CK1 and GSK3B. Dephosphorylated by PPP1CA and PPP2CA. Phosphorylation by CK1 enhances binding of GSK3B to AXIN1. In terms of processing, ADP-ribosylated by tankyrase TNKS and TNKS2. Poly-ADP-ribosylated protein is recognized by RNF146, followed by ubiquitination at 'Lys-48' and subsequent activation of the Wnt signaling pathway. Ubiquitinated by RNF146 when poly-ADP-ribosylated, leading to its degradation and subsequent activation of the Wnt signaling pathway. Sumoylation at Lys-857 and Lys-860 prevents ubiquitination and degradation. Sumoylation is required for AXIN1-mediated JNK activation. Deubiquitinated by USP34, deubiquitinated downstream of beta-catenin stabilization step: deubiquitination is important for nuclear accumulation during Wnt signaling to positively regulate beta-catenin (CTNBB1)-mediated transcription. Ubiquitination by SIAH1 and SIAH2 induces its proteasomal degradation as part of the activation of the Wnt signaling pathway. Ubiquitously expressed.

It is found in the cytoplasm. It localises to the nucleus. The protein resides in the membrane. The protein localises to the cell membrane. Functionally, component of the beta-catenin destruction complex required for regulating CTNNB1 levels through phosphorylation and ubiquitination, and modulating Wnt-signaling. Controls dorsoventral patterning via two opposing effects; down-regulates CTNNB1 to inhibit the Wnt signaling pathway and ventralize embryos, but also dorsalizes embryos by activating a Wnt-independent JNK signaling pathway. In Wnt signaling, probably facilitates the phosphorylation of CTNNB1 and APC by GSK3B. Likely to function as a tumor suppressor. Enhances TGF-beta signaling by recruiting the RNF111 E3 ubiquitin ligase and promoting the degradation of inhibitory SMAD7. Also a component of the AXIN1-HIPK2-TP53 complex which controls cell growth, apoptosis and development. Facilitates the phosphorylation of TP53 by HIPK2 upon ultraviolet irradiation. The protein is Axin-1 (AXIN1) of Homo sapiens (Human).